The primary structure comprises 225 residues: Two-component response regulator PhoP (225 aa).

Residues 2 to 116 enclose the Response regulatory domain; that stretch reads KLLVVEDEAL…ELEARLNALL (115 aa). At Asp-51 the chain carries 4-aspartylphosphate. The ompR/PhoB-type DNA-binding region spans 124-222; that stretch reads QSTIEAGPLV…VRGQGYLFTE (99 aa).

Functionally, member of the two-component regulatory system PhoP/PhoQ that plays a role in the regulation of resistance towards polymyxin B and cationic antimicrobial peptides in response to limiting concentrations of Mg(2+). Functions as a transcriptional activator by direct binding to a cis-acting sequence upstream of the target gene promoters including oprH and pmrH promoters. The protein is Two-component response regulator PhoP (phoP) of Pseudomonas aeruginosa (strain ATCC 15692 / DSM 22644 / CIP 104116 / JCM 14847 / LMG 12228 / 1C / PRS 101 / PAO1).